The following is a 622-amino-acid chain: Sodium/potassium/calcium exchanger 4 (622 aa).

The first 38 residues, 1–38 (MALRGTLRPLKVRRRREMLPQQVGFVCAVLALVCCASG), serve as a signal peptide directing secretion. Residues 39–97 (LFGSLGHKTASASKRVLPDTWRNRKLMAPVNGTQTAKNCTDPAIHEFPTDLFSNKERQH) are Extracellular-facing. N-linked (GlcNAc...) asparagine glycans are attached at residues asparagine 69 and asparagine 76. The helical transmembrane segment at 98 to 118 (GAVLLHILGALYMFYALAIVC) threads the bilayer. The Cytoplasmic portion of the chain corresponds to 119–142 (DDFFVPSLEKICERLHLSEDVAGA). An Alpha-1 repeat occupies 139-179 (VAGATFMAAGSSTPELFASVIGVFITHGDVGVGTIVGSAVF). The chain crosses the membrane as a helical span at residues 143 to 163 (TFMAAGSSTPELFASVIGVFI). Topologically, residues 164–172 (THGDVGVGT) are extracellular. A helical membrane pass occupies residues 173–193 (IVGSAVFNILCIIGVCGLFAG). Over 194 to 200 (QVVRLTW) the chain is Cytoplasmic. Residues 201-221 (WAVCRDSVYYTISVIVLIVFI) form a helical membrane-spanning segment. Residues 222–224 (YDE) are Extracellular-facing. The helical transmembrane segment at 225 to 245 (QIVWWEGLVLIILYVFYILIM) threads the bilayer. The Cytoplasmic segment spans residues 246–457 (KYNVKMQAFF…RWEKFFMVTF (212 aa)). A disordered region spans residues 358-410 (ANGVSSKPLQNGRHENIENGNVPVENPEDPQQNQEQQPPPQPPPPEPEPVEAD). Residues 380–393 (PVENPEDPQQNQEQ) are compositionally biased toward low complexity. Positions 394-404 (QPPPQPPPPEP) are enriched in pro residues. Residues 458–478 (ITATLWIAVFSYIMVWLVTII) form a helical membrane-spanning segment. Residue glycine 479 is a topological domain, extracellular. The chain crosses the membrane as a helical span at residues 480–500 (YTLGIPDVIMGITFLAAGTSV). The stretch at 495 to 526 (AAGTSVPDCMASLIVARQGLGDMAVSNTIGSN) is one Alpha-2 repeat. Residues 501 to 526 (PDCMASLIVARQGLGDMAVSNTIGSN) are Cytoplasmic-facing. A helical transmembrane segment spans residues 527–547 (VFDILVGLGVPWGLQTMVVNY). At 548 to 557 (GSTVKINSRG) the chain is on the extracellular side. The chain crosses the membrane as a helical span at residues 558-578 (LVYSVVLLLGSVALTVLGIHL). The Cytoplasmic segment spans residues 579–586 (NKWRLDRK). The helical transmembrane segment at 587 to 607 (LGVYVLVLYAIFLCFSIMIEF) threads the bilayer. Residues 608 to 622 (NVFTFVNLPMCREDD) are Extracellular-facing.

The protein belongs to the Ca(2+):cation antiporter (CaCA) (TC 2.A.19) family. SLC24A subfamily. Expressed abundantly in all regions of the brain, aorta, lung and thymus. Expressed at lower levels in the stomach and intestine.

It is found in the cell membrane. The protein localises to the cytoplasm. It catalyses the reaction Ca(2+)(out) + K(+)(out) + 4 Na(+)(in) = Ca(2+)(in) + K(+)(in) + 4 Na(+)(out). Functionally, calcium, potassium:sodium antiporter that transports 1 Ca(2+) and 1 K(+) in exchange for 4 Na(+). Controls the rapid response termination and proper regulation of adaptation in olfactory sensory neurons (OSNs) which subsequently influences how odor information is encoded and perceived. May play a role in calcium transport during amelogenesis. This chain is Sodium/potassium/calcium exchanger 4, found in Homo sapiens (Human).